Consider the following 256-residue polypeptide: Ribosomal RNA small subunit methyltransferase A (256 aa).

S-adenosyl-L-methionine contacts are provided by histidine 12, leucine 14, glycine 39, glutamate 60, aspartate 81, and asparagine 103.

Belongs to the class I-like SAM-binding methyltransferase superfamily. rRNA adenine N(6)-methyltransferase family. RsmA subfamily.

It localises to the cytoplasm. The catalysed reaction is adenosine(1518)/adenosine(1519) in 16S rRNA + 4 S-adenosyl-L-methionine = N(6)-dimethyladenosine(1518)/N(6)-dimethyladenosine(1519) in 16S rRNA + 4 S-adenosyl-L-homocysteine + 4 H(+). In terms of biological role, specifically dimethylates two adjacent adenosines (A1518 and A1519) in the loop of a conserved hairpin near the 3'-end of 16S rRNA in the 30S particle. May play a critical role in biogenesis of 30S subunits. The polypeptide is Ribosomal RNA small subunit methyltransferase A (Methylibium petroleiphilum (strain ATCC BAA-1232 / LMG 22953 / PM1)).